The chain runs to 247 residues: Retbindin (247 aa).

The N-terminal stretch at 1–31 is a signal peptide; sequence MAHEGHSQHSGLVWALRPILAWIFLVACGWS. 4 disulfides stabilise this stretch: cysteine 99-cysteine 169, cysteine 106-cysteine 146, cysteine 139-cysteine 183, and cysteine 152-cysteine 165.

Belongs to the folate receptor family. In terms of processing, not N-glycosylated. As to expression, expressed in the peripheral retina where it localizes to the inter-photoreceptor matrix (at protein level). May be produced by rod photoreceptors (at protein level).

It localises to the secreted. The protein resides in the extracellular space. The protein localises to the extracellular matrix. It is found in the interphotoreceptor matrix. Its subcellular location is the cell membrane. Its function is as follows. Riboflavin-binding protein which might have a role in retinal flavin transport. The sequence is that of Retbindin (Rtbdn) from Mus musculus (Mouse).